A 211-amino-acid chain; its full sequence is Envelope protein UL45 homolog (211 aa).

Residues 1–46 (MMSPTPEDDRDLVVVRGRLRMMDNGAEHDRERRSYTAWPHLCCGCT) lie on the Intravirion side of the membrane. Residues 47 to 67 (IGIILTMFVIATTLLLASLFA) traverse the membrane as a helical; Signal-anchor for type II membrane protein segment. Residues 68 to 211 (FSYMSLESGT…SSILSNAIMK (144 aa)) lie on the Virion surface side of the membrane. 2 N-linked (GlcNAc...) asparagine; by host glycosylation sites follow: asparagine 96 and asparagine 133.

Belongs to the herpesviridae HHV-1 UL45 family.

The protein localises to the virion membrane. In Gallid herpesvirus 2 (strain Chicken/Md5/ATCC VR-987) (GaHV-2), this protein is Envelope protein UL45 homolog (UL45H).